A 666-amino-acid polypeptide reads, in one-letter code: Collagen alpha-1(XXV) chain (666 aa).

Residues Met-1 to Gly-24 form a disordered region. Over Met-1–Ser-33 the chain is Cytoplasmic. Basic and acidic residues predominate over residues Gly-11 to Arg-21. Residues Cys-34–Val-54 form a helical; Signal-anchor for type II membrane protein membrane-spanning segment. Topologically, residues Lys-55 to Lys-666 are extracellular. The segment at Leu-116 to Pro-168 is disordered. Positions Pro-121–Arg-164 constitute a Collagen-like 1 domain. Positions Pro-140–Pro-151 are enriched in pro residues. Positions Leu-181 to Lys-188 are interaction with amyloid-beta peptide. 2 disordered regions span residues Gly-189–Ile-428 and Leu-445–Lys-666. Collagen-like domains lie at Gly-192–Ser-247, Gly-249–Ser-308, Gly-311–Pro-370, Gly-373–Ala-425, Gly-455–Lys-514, Gly-529–Met-588, and Gly-589–Asp-648. A compositionally biased stretch (pro residues) spans Pro-196–Pro-208. A compositionally biased stretch (low complexity) spans Pro-230–Lys-245. Over residues Glu-280–Ala-290 the composition is skewed to basic and acidic residues. Residues Leu-336 to Pro-358 show a composition bias toward low complexity. Basic and acidic residues-rich tracts occupy residues Lys-361–Asp-377 and Ser-398–Asp-407. The span at Gln-457–Gln-466 shows a compositional bias: low complexity. Over residues Gly-494–Gly-503 the composition is skewed to gly residues. Residues Ile-528–Met-543 are compositionally biased toward pro residues. Residues Arg-615–Glu-638 are compositionally biased toward basic and acidic residues.

As to quaternary structure, forms homodimers and homotrimers. Binds to the fibrillized forms of amyloid-beta protein 40 (beta-APP40) and amyloid-betad protein 42 (beta-APP42). Found associated with beta-APP42 more frequently than with beta-APP40. Undergoes proteolytic cleavage by furin protease to yield the soluble collagen-like Alzheimer amyloid plaque component. Post-translationally, glycosylated. In terms of processing, hydroxylated on proline and lysine residues. In terms of tissue distribution, expressed predominantly in neurons with low levels also detected in heart, testis and eye.

It is found in the membrane. Inhibits fibrillization of amyloid-beta peptide during the elongation phase. Has also been shown to assemble amyloid fibrils into protease-resistant aggregates. Binds heparin. The chain is Collagen alpha-1(XXV) chain from Mus musculus (Mouse).